A 366-amino-acid polypeptide reads, in one-letter code: Growth hormone secretagogue receptor type 1 (366 aa).

The Extracellular segment spans residues 1 to 40 (MWNATLSEEPGYNLTLPDLGWDAPADNDSLTDELLPLFPA). 3 N-linked (GlcNAc...) asparagine glycosylation sites follow: Asn3, Asn13, and Asn27. Residues 41 to 66 (PLLAGVTATCVALFVVGIAGNLLTML) traverse the membrane as a helical segment. The Cytoplasmic portion of the chain corresponds to 67–72 (VVSRFR). The helical transmembrane segment at 73 to 96 (ELRTTTNLYLSSMAFSDLLIFLCM) threads the bilayer. At 97 to 117 (PLDLVRLWQYRPWNFGDLLCK) the chain is on the extracellular side. Cys116 and Cys198 are oxidised to a cystine. The chain crosses the membrane as a helical span at residues 118–139 (LFQFVSESCTYATVLTITALSV). Residues 140-162 (ERYFAICFPLRAKVVVTKGRVKL) are Cytoplasmic-facing. Residues 163–183 (VILVIWAVAFCSAGPIFVLVG) form a helical membrane-spanning segment. At 184-211 (VEHENGTDPRDTNECRATEFAVRSGLLT) the chain is on the extracellular side. Asn188 carries an N-linked (GlcNAc...) asparagine glycan. The helical transmembrane segment at 212-235 (VMVWVSSVFFFLPVFCLTVLYSLI) threads the bilayer. Residues 236-263 (GRKLWRRKRGEAAVGASLRDQNHKQTVK) lie on the Cytoplasmic side of the membrane. Residues 264-285 (MLAVVVFAFILCWLPFHVGRYL) form a helical membrane-spanning segment. Residues 286 to 302 (FSKSFEPGSLEIAQISQ) are Extracellular-facing. A helical transmembrane segment spans residues 303-326 (YCNLVSFVLFYLSAAINPILYNIM). Over 327 to 366 (SKKYRVAVFKLLGFEPFSQRKLSTLKDESSRAWTETSINT) the chain is Cytoplasmic.

This sequence belongs to the G-protein coupled receptor 1 family.

Its subcellular location is the cell membrane. Functionally, receptor for ghrelin, coupled to G-alpha-11 proteins. Stimulates growth hormone secretion. Also binds other growth hormone releasing peptides (GHRP) (e.g. Met-enkephalin and GHRP-6) as well as non-peptide, low molecular weight secretagogues (e.g. L-692,429, MK-0677, adenosine). This is Growth hormone secretagogue receptor type 1 (GHSR) from Mustela putorius furo (European domestic ferret).